The chain runs to 449 residues: Zinc finger and BTB domain-containing protein 14 (449 aa).

The BTB domain maps to 36-102 (CDIAIVVEDV…MYTAKISVKK (67 aa)). A Glycyl lysine isopeptide (Lys-Gly) (interchain with G-Cter in SUMO2) cross-link involves residue K46. The short motif at 50–66 (HRCVLAACSTYFKKLFK) is the Nuclear localization signal element. The interval 156-194 (ADAQDDDVEEIGDQDDSPSDDTVEGTPPSQEDGKSPTTT) is disordered. Positions 157–178 (DAQDDDVEEIGDQDDSPSDDTV) are enriched in acidic residues. Glycyl lysine isopeptide (Lys-Gly) (interchain with G-Cter in SUMO2) cross-links involve residues K203 and K249. C2H2-type zinc fingers lie at residues 277–304 (IACQ…ADRP), 305–332 (FVCE…GYKP), 333–360 (YSCE…NERP), 361–388 (FACH…GEKP), and 389–417 (FVCG…ERKQ). A compositionally biased stretch (basic and acidic residues) spans 405-417 (KRHENNMHSERKQ). The tract at residues 405–424 (KRHENNMHSERKQVTPSAIQ) is disordered.

It belongs to the krueppel C2H2-type zinc-finger protein family. Interacts with ZBTB21. As to expression, ubiquitous.

Its subcellular location is the nucleus. Transcriptional activator of the dopamine transporter (DAT), binding it's promoter at the consensus sequence 5'-CCTGCACAGTTCACGGA-3'. Binds to 5'-d(GCC)(n)-3' trinucleotide repeats in promoter regions and acts as a repressor of the FMR1 gene. Transcriptional repressor of MYC and thymidine kinase promoters. The polypeptide is Zinc finger and BTB domain-containing protein 14 (Zbtb14) (Mus musculus (Mouse)).